We begin with the raw amino-acid sequence, 534 residues long: CTP synthase (534 aa).

The segment at 1–267 (MSKYIVVTGG…GSYILNRLNI (267 aa)) is amidoligase domain. Ser13 provides a ligand contact to CTP. Residue Ser13 coordinates UTP. 14-19 (SIGKGI) contacts ATP. Tyr54 provides a ligand contact to L-glutamine. An ATP-binding site is contributed by Asp71. Positions 71 and 141 each coordinate Mg(2+). Residues 148–150 (DIE), 188–193 (KTKPTQ), and Lys224 contribute to the CTP site. UTP contacts are provided by residues 188-193 (KTKPTQ) and Lys224. The 239-residue stretch at 294 to 532 (KIAVVGKYIE…IKAAKNKKQN (239 aa)) folds into the Glutamine amidotransferase type-1 domain. An L-glutamine-binding site is contributed by Gly353. Cys380 serves as the catalytic Nucleophile; for glutamine hydrolysis. L-glutamine is bound by residues 381-384 (LGLH), Glu403, and Arg460. Residues His505 and Glu507 contribute to the active site.

Belongs to the CTP synthase family. As to quaternary structure, homotetramer.

The catalysed reaction is UTP + L-glutamine + ATP + H2O = CTP + L-glutamate + ADP + phosphate + 2 H(+). It catalyses the reaction L-glutamine + H2O = L-glutamate + NH4(+). The enzyme catalyses UTP + NH4(+) + ATP = CTP + ADP + phosphate + 2 H(+). It functions in the pathway pyrimidine metabolism; CTP biosynthesis via de novo pathway; CTP from UDP: step 2/2. Its activity is regulated as follows. Allosterically activated by GTP, when glutamine is the substrate; GTP has no effect on the reaction when ammonia is the substrate. The allosteric effector GTP functions by stabilizing the protein conformation that binds the tetrahedral intermediate(s) formed during glutamine hydrolysis. Inhibited by the product CTP, via allosteric rather than competitive inhibition. Catalyzes the ATP-dependent amination of UTP to CTP with either L-glutamine or ammonia as the source of nitrogen. Regulates intracellular CTP levels through interactions with the four ribonucleotide triphosphates. In Methanosphaera stadtmanae (strain ATCC 43021 / DSM 3091 / JCM 11832 / MCB-3), this protein is CTP synthase.